A 682-amino-acid chain; its full sequence is Penicillin-binding protein activator LpoA (682 aa).

Positions 1-26 are cleaved as a signal peptide; it reads MLSSITVRTKSGRLIPLVLAATLLAA. A lipid anchor (N-palmitoyl cysteine) is attached at C27. A lipid anchor (S-diacylglycerol cysteine) is attached at C27.

Belongs to the LpoA family. As to quaternary structure, interacts with PBP1a.

The protein localises to the cell outer membrane. Regulator of peptidoglycan synthesis that is essential for the function of penicillin-binding protein 1A (PBP1a). The polypeptide is Penicillin-binding protein activator LpoA (Edwardsiella ictaluri (strain 93-146)).